The sequence spans 265 residues: 3-methyl-2-oxobutanoate hydroxymethyltransferase (265 aa).

Residues Asp43 and Asp82 each contribute to the Mg(2+) site. 3-methyl-2-oxobutanoate-binding positions include 43-44 (DS), Asp82, and Lys111. Mg(2+) is bound at residue Glu113. Glu180 (proton acceptor) is an active-site residue.

Belongs to the PanB family. In terms of assembly, homodecamer; pentamer of dimers. Mg(2+) serves as cofactor.

The protein localises to the cytoplasm. The enzyme catalyses 3-methyl-2-oxobutanoate + (6R)-5,10-methylene-5,6,7,8-tetrahydrofolate + H2O = 2-dehydropantoate + (6S)-5,6,7,8-tetrahydrofolate. The protein operates within cofactor biosynthesis; (R)-pantothenate biosynthesis; (R)-pantoate from 3-methyl-2-oxobutanoate: step 1/2. Its function is as follows. Catalyzes the reversible reaction in which hydroxymethyl group from 5,10-methylenetetrahydrofolate is transferred onto alpha-ketoisovalerate to form ketopantoate. The polypeptide is 3-methyl-2-oxobutanoate hydroxymethyltransferase (Francisella tularensis subsp. holarctica (strain OSU18)).